We begin with the raw amino-acid sequence, 3114 residues long: Centromere protein F (3114 aa).

Residues methionine 1–methionine 481 form an interaction with SNAP25 and required for localization to the cytoplasm region. Residues proline 13 to alanine 131 are a coiled coil. Residue serine 106 is modified to Phosphoserine. Phosphothreonine occurs at positions 144, 151, and 154. Residue tyrosine 158 is modified to Phosphotyrosine. The span at glutamine 211–threonine 235 shows a compositional bias: polar residues. Residues glutamine 211–proline 236 are disordered. Serine 242 and serine 276 each carry phosphoserine. Positions leucine 280–valine 685 form a coiled coil. 6 positions are modified to phosphoserine: serine 773, serine 783, serine 821, serine 834, serine 838, and serine 876. 2 coiled-coil regions span residues valine 899 to glutamate 989 and leucine 1196 to aspartate 1244. Residues serine 1248, serine 1255, and serine 1259 each carry the phosphoserine modification. Residues valine 1549 to glutamine 1646 adopt a coiled-coil conformation. Phosphoserine is present on residues serine 1651, serine 1652, and serine 1654. Disordered regions lie at residues arginine 1667–valine 1690 and threonine 1710–isoleucine 1746. The span at glutamate 1669 to valine 1690 shows a compositional bias: basic and acidic residues. The residue at position 1726 (serine 1726) is a Phosphoserine. Residue threonine 1862 is modified to Phosphothreonine. Phosphoserine is present on residues serine 1868 and serine 1892. 2 coiled-coil regions span residues asparagine 1890–arginine 2078 and leucine 2107–glutamine 2891. The segment at leucine 2026 to asparagine 2351 is interaction with NDE1 and NDEL1. 2 tandem repeats follow at residues glutamine 2111–aspartate 2290 and isoleucine 2293–serine 2472. Residues glutamine 2111–serine 2472 form a 2 X 177 AA tandem repeats region. A sufficient for self-association region spans residues serine 2392 to glycine 2829. The tract at residues serine 2392–alanine 3017 is sufficient for centromere localization. A phosphoserine mark is found at serine 2416 and serine 2417. Residue lysine 2779 is modified to N6-acetyllysine. Positions valine 2831–alanine 3017 are sufficient for nuclear localization. A disordered region spans residues glutamine 2891–glutamate 2977. Serine 2900, serine 2911, serine 2922, and serine 2936 each carry phosphoserine. A Nuclear localization signal motif is present at residues lysine 2919 to serine 2936. Threonine 2949 bears the Phosphothreonine mark. Phosphoserine is present on residues serine 2952, serine 2998, serine 3023, and serine 3026. Positions proline 3024–glutamine 3114 are disordered. Residues alanine 3033–serine 3045 are compositionally biased toward polar residues. A phosphoserine mark is found at serine 3054, serine 3079, and serine 3083. The segment covering serine 3079–arginine 3089 has biased composition (basic and acidic residues). Polar residues predominate over residues serine 3105–glutamine 3114. Cysteine 3111 carries the cysteine methyl ester modification. Cysteine 3111 carries S-farnesyl cysteine lipidation. The propeptide at lysine 3112–glutamine 3114 is removed in mature form.

This sequence belongs to the centromere protein F family. In terms of assembly, interacts with and STX4 (via C-terminus). Interacts (via N-terminus) with RBL1, RBL2 and SNAP25. Self-associates. Interacts with CENP-E and BUBR1 (via C-terminus). Interacts (via C-terminus) with NDE1, NDEL1 and RB1. In terms of processing, hyperphosphorylated during mitosis.

It localises to the cytoplasm. The protein localises to the perinuclear region. The protein resides in the nucleus matrix. Its subcellular location is the chromosome. It is found in the centromere. It localises to the kinetochore. The protein localises to the cytoskeleton. The protein resides in the spindle. In terms of biological role, required for kinetochore function and chromosome segregation in mitosis. Required for kinetochore localization of dynein, LIS1, NDE1 and NDEL1. Regulates recycling of the plasma membrane by acting as a link between recycling vesicles and the microtubule network though its association with STX4 and SNAP25. Acts as a potential inhibitor of pocket protein-mediated cellular processes during development by regulating the activity of RB proteins during cell division and proliferation. May play a regulatory or permissive role in the normal embryonic cardiomyocyte cell cycle and in promoting continued mitosis in transformed, abnormally dividing neonatal cardiomyocytes. Interaction with RB directs embryonic stem cells toward a cardiac lineage. Involved in the regulation of DNA synthesis and hence cell cycle progression, via its C-terminus. Has a potential role regulating skeletal myogenesis and in cell differentiation in embryogenesis. Involved in dendritic cell regulation of T-cell immunity against chlamydia. This chain is Centromere protein F (CENPF), found in Homo sapiens (Human).